A 395-amino-acid polypeptide reads, in one-letter code: Ribosomal RNA small subunit methyltransferase H (395 aa).

S-adenosyl-L-methionine contacts are provided by residues 101-103, Asp-120, Tyr-147, Asp-171, and Gln-178; that span reads GGH.

This sequence belongs to the methyltransferase superfamily. RsmH family.

The protein localises to the cytoplasm. The enzyme catalyses cytidine(1402) in 16S rRNA + S-adenosyl-L-methionine = N(4)-methylcytidine(1402) in 16S rRNA + S-adenosyl-L-homocysteine + H(+). Functionally, specifically methylates the N4 position of cytidine in position 1402 (C1402) of 16S rRNA. The polypeptide is Ribosomal RNA small subunit methyltransferase H (Mycobacterium ulcerans (strain Agy99)).